The sequence spans 109 residues: Thiosulfate sulfurtransferase GlpE (109 aa).

Residues 16-104 (RSNGAVVVDI…WRATFPSETA (89 aa)) enclose the Rhodanese domain. The active-site Cysteine persulfide intermediate is Cys-64.

The protein belongs to the GlpE family.

It localises to the cytoplasm. The catalysed reaction is thiosulfate + hydrogen cyanide = thiocyanate + sulfite + 2 H(+). It carries out the reaction thiosulfate + [thioredoxin]-dithiol = [thioredoxin]-disulfide + hydrogen sulfide + sulfite + 2 H(+). Functionally, transferase that catalyzes the transfer of sulfur from thiosulfate to thiophilic acceptors such as cyanide or dithiols. May function in a CysM-independent thiosulfate assimilation pathway by catalyzing the conversion of thiosulfate to sulfite, which can then be used for L-cysteine biosynthesis. The protein is Thiosulfate sulfurtransferase GlpE of Ectopseudomonas mendocina (strain ymp) (Pseudomonas mendocina).